We begin with the raw amino-acid sequence, 1372 residues long: MAQQTFTGRKRVRKFFGHIKEVAEMPNLIEVQKASYDQFLMVDEPTGGRPDEGLQAVFRSVFPISDFSGTSMLEFVRYEFEPPKYDVDECRQRGMTFAAPLKVTLRLIVFDIDEETGAKSVKDIKEQDVYMGDIPLMTMNGTFIVNGTERVIVSQMHRSPGVFFDHDKGKTHSSGKLLFAARVIPYRGSWLDIEFDAKDIVFARIDRRRKLPVTSLMFALGLDGEQILATFYKKLIYKRIKEGWRVPFDANRFRGYSTVNDLIDADTGKVVLEAGKKLTVRAARQLQEKGLKALRMSDEELLGNYIAEDLVNPKTGEIYAEAGEEITDKLFKVLNEQGYKDLPLLDIDHVNVGPYIRNTLSADKNMTREDALFDIYRVMRPGEPPTLDSAQAMFQSLFFDAERYDLSAVGRVKMNMRLELDAPDTQRTLRKEDILAVIKTLVDLRDGKGEIDDIDHLGNRRVRSVGELMENQYRIGLLRMERAIKERMSSVDIDTVMPQDLINAKPAAAAVREFFGSSQLSQFMDQTNPLSEITHKRRLSALGPGGLTRERAGFEVRDVHPTHYGRICPIETPEGPNIGLINSLATFARVNKYGFVETPYRKVKDGRVTDEVVYLSAMEEGRYRVAQANVPLDAKGRFTEDLVVCRHAGEVVPMTPDKVDYMDVSPKQLVSVAAALIPFLENDDANRALMGSNMQRQAVPLVRAEAPFVGTGMEGVVARDSGAAIAARRSGVIDQIDATRVVIRATEDLDPTKSGVDIYRLMKFQRSNQSTCINQRPLVKVGDIVKKGDIIADGPSTDLGELALGRNVLVAFMPWNGYNFEDSILLSERIVKEDVFTSIHIEEFEVMARDTKLGPEEITRDIPNVSEEALKNLDEAGIVYIGAEVRAGDILVGKITPKGESPMTPEEKLLRAIFGEKASDVRDTSLRVPPGVQGTIVEVRVFNRHGVDKDERALAIEREEIERLAKDRDDEQAILDRNVYSRLADMLDGRQGISGPKGFKKDTKITRAVLDEYPKSQWWLFAASNDKLMAEIEAMRKQYDESKKGLEQRFLDKVEKLQRGDELPPGVMKMVKVFVAVKRKIQPGDKMAGRHGNKGVVSKIVPIEDMPFLEDGTHADIVLNPLGVPSRMNVGQILETHLGWACAGLGKRIAQTVDAYLSKQDVKPLKETLKRIYGEDETIKTLNDNELLELGHNLSRGVPIATPVFDGAKESDIEEMLKLAGMDASGQSTVYDGRTGDPFDRKVTVGYIYMLKLHHLVDDKIHARSIGPYSLVTQQPLGGKAQFGGQRFGEMEVWALEAYGAAYTLQEMLTVKSDDVAGRTKVYEAIVRGDDTFEAGIPESFNVLVKEMRSLGLNVDLHNSKLGPAPTSEAAE.

Belongs to the RNA polymerase beta chain family. As to quaternary structure, the RNAP catalytic core consists of 2 alpha, 1 beta, 1 beta' and 1 omega subunit. When a sigma factor is associated with the core the holoenzyme is formed, which can initiate transcription.

The enzyme catalyses RNA(n) + a ribonucleoside 5'-triphosphate = RNA(n+1) + diphosphate. In terms of biological role, DNA-dependent RNA polymerase catalyzes the transcription of DNA into RNA using the four ribonucleoside triphosphates as substrates. The chain is DNA-directed RNA polymerase subunit beta from Bradyrhizobium sp. (strain ORS 278).